Consider the following 88-residue polypeptide: Actobindin (88 aa).

Residue methionine 1 is modified to N-acetylmethionine. Residues 1 to 22 form a disordered region; that stretch reads MNPELQSAIGQGAALKHAETVD. Residue lysine 35 is modified to N6,N6,N6-trimethyllysine. Residues 37–54 form the WH2 domain; sequence DRSSFLEEVAKPHELKHA. Lysine 72 carries the N6,N6,N6-trimethyllysine modification.

Monomer.

Is able to bind two actin monomers at high concentrations of G-actin. The protein is Actobindin of Acanthamoeba castellanii (Amoeba).